The sequence spans 241 residues: Uridylate kinase (241 aa).

15-18 (KLSG) provides a ligand contact to ATP. Positions 23-28 (GTEGFG) are involved in allosteric activation by GTP. Glycine 57 contributes to the UMP binding site. Residues glycine 58 and arginine 62 each coordinate ATP. UMP is bound by residues aspartate 77 and 138–145 (TGNPFFTT). Positions 165, 171, and 174 each coordinate ATP.

It belongs to the UMP kinase family. As to quaternary structure, homohexamer.

It localises to the cytoplasm. It catalyses the reaction UMP + ATP = UDP + ADP. It participates in pyrimidine metabolism; CTP biosynthesis via de novo pathway; UDP from UMP (UMPK route): step 1/1. Allosterically activated by GTP. Inhibited by UTP. In terms of biological role, catalyzes the reversible phosphorylation of UMP to UDP. The chain is Uridylate kinase from Salmonella choleraesuis (strain SC-B67).